The following is a 364-amino-acid chain: tRNA 2-selenouridine synthase (364 aa).

In terms of domain architecture, Rhodanese spans 14–137 (LLADTPLIDV…LRQTAIQATW (124 aa)). Cysteine 97 acts as the S-selanylcysteine intermediate in catalysis.

It belongs to the SelU family. Monomer.

The enzyme catalyses 5-methylaminomethyl-2-thiouridine(34) in tRNA + selenophosphate + (2E)-geranyl diphosphate + H2O + H(+) = 5-methylaminomethyl-2-selenouridine(34) in tRNA + (2E)-thiogeraniol + phosphate + diphosphate. It catalyses the reaction 5-methylaminomethyl-2-thiouridine(34) in tRNA + (2E)-geranyl diphosphate = 5-methylaminomethyl-S-(2E)-geranyl-thiouridine(34) in tRNA + diphosphate. It carries out the reaction 5-methylaminomethyl-S-(2E)-geranyl-thiouridine(34) in tRNA + selenophosphate + H(+) = 5-methylaminomethyl-2-(Se-phospho)selenouridine(34) in tRNA + (2E)-thiogeraniol. The catalysed reaction is 5-methylaminomethyl-2-(Se-phospho)selenouridine(34) in tRNA + H2O = 5-methylaminomethyl-2-selenouridine(34) in tRNA + phosphate. Its function is as follows. Involved in the post-transcriptional modification of the uridine at the wobble position (U34) of tRNA(Lys), tRNA(Glu) and tRNA(Gln). Catalyzes the conversion of 2-thiouridine (S2U-RNA) to 2-selenouridine (Se2U-RNA). Acts in a two-step process involving geranylation of 2-thiouridine (S2U) to S-geranyl-2-thiouridine (geS2U) and subsequent selenation of the latter derivative to 2-selenouridine (Se2U) in the tRNA chain. This is tRNA 2-selenouridine synthase from Salmonella heidelberg (strain SL476).